Here is a 348-residue protein sequence, read N- to C-terminus: A-type ATP synthase subunit C (348 aa).

This sequence belongs to the V-ATPase V0D/AC39 subunit family. Has multiple subunits with at least A(3), B(3), C, D, E, F, H, I and proteolipid K(x).

The protein localises to the cell membrane. Its function is as follows. Component of the A-type ATP synthase that produces ATP from ADP in the presence of a proton gradient across the membrane. This is A-type ATP synthase subunit C from Haloferax volcanii (strain ATCC 29605 / DSM 3757 / JCM 8879 / NBRC 14742 / NCIMB 2012 / VKM B-1768 / DS2) (Halobacterium volcanii).